Consider the following 616-residue polypeptide: Dihydroxy-acid dehydratase (616 aa).

Mg(2+) is bound at residue aspartate 81. Residue cysteine 122 participates in [2Fe-2S] cluster binding. Mg(2+) contacts are provided by aspartate 123 and lysine 124. Residue lysine 124 is modified to N6-carboxylysine. [2Fe-2S] cluster is bound at residue cysteine 195. Glutamate 491 lines the Mg(2+) pocket. The Proton acceptor role is filled by serine 517.

It belongs to the IlvD/Edd family. In terms of assembly, homodimer. Requires [2Fe-2S] cluster as cofactor. Mg(2+) is required as a cofactor.

It catalyses the reaction (2R)-2,3-dihydroxy-3-methylbutanoate = 3-methyl-2-oxobutanoate + H2O. It carries out the reaction (2R,3R)-2,3-dihydroxy-3-methylpentanoate = (S)-3-methyl-2-oxopentanoate + H2O. It participates in amino-acid biosynthesis; L-isoleucine biosynthesis; L-isoleucine from 2-oxobutanoate: step 3/4. Its pathway is amino-acid biosynthesis; L-valine biosynthesis; L-valine from pyruvate: step 3/4. Functionally, functions in the biosynthesis of branched-chain amino acids. Catalyzes the dehydration of (2R,3R)-2,3-dihydroxy-3-methylpentanoate (2,3-dihydroxy-3-methylvalerate) into 2-oxo-3-methylpentanoate (2-oxo-3-methylvalerate) and of (2R)-2,3-dihydroxy-3-methylbutanoate (2,3-dihydroxyisovalerate) into 2-oxo-3-methylbutanoate (2-oxoisovalerate), the penultimate precursor to L-isoleucine and L-valine, respectively. The polypeptide is Dihydroxy-acid dehydratase (Salmonella paratyphi C (strain RKS4594)).